Reading from the N-terminus, the 1926-residue chain is MATRRAIVPEQQQEPSSPASEISKNKDGQEQSEMVSPMEEEGFCWPGPKSVALRRTSDGFGFTLRHFIVYPPESAVHTSIKDEENGNRGVNTGRPRNKLEPMDTIFVKQVKEGGPAHEAGLCTGDRIIKVNGESVIGKTYSQVIALIQNSDSTLELSVMPKDEDILQLAYSQDAYLKGNDSYSGNAHHIPEPPPLCYPRIKPAASVMAQPVEVPPSGTSLAKQQSSRPVRTATTQPDRSYRVEIQVPPSPTELVKSNTAVCVCNEAVRTVLVPSEKVVDLSSNRTNRAGPLHRTEEVRYGLADPSILKRTTSPTSSIPHVQMVPTARQFDNAGVIGKPPSYGGHAENMFSTRPTAQAEGSPSPTNHYSSPGPHQQIDWRNYKTYKEYIDNRRMQMYGCRTIQERLDSLKAASQTTTDYNQMLPNHFSGQSRRRSTSHDRVQQSVQMRQRSVSQERLEDPVLMKEWPRSASQDTLSSAVASRNHRSESWDYHARKGDFDQFIVETQSNGERKHNYKWSGFTEQDDRRGITERPRQHSFHMSLRSPNFTMAPVPYTSFAHPLQKVHPDVKTIQPTRQNSYRSPHPRPAVSDRSGFAVSKSNSVKIPTPCASKSYSPSVRSDDGIVIDQKPVNYMHVSGPQNFQRKTQTESASGFQLDSVKTSMSASSSPPANTKPAKQVKHSTATSQNVDVKKTPSPEANAGDSDAVLTPVDQVVLREKPSPGQQTSPPIRQQSYIFAVNEQEGVSDTTCWLPNDARREVHIKRIEQRKASGSNSPGNSLASIPFIDEPTSPSIDHEIGNIPASAVISISEQPLPTITTVPPSPTSPVPLMRRHFSHDHDSIRPSILEVNSKTERSKSCDEGLDDYKEEGKLGLKQGSSLKGVQARENVPSSEDSESRKDSSSDVFSDSNKEGFLYFRQVTTEKGKRVSGSIRPWKQMYVVLRGSALYLQKDKKEQTGHSSAQSDEEQLIGINGCLIDISYSETKRKHVFRLTTSDREFLFQAEDRDDMLAWIKAIQENGNLNDEQTDQASRVLISKRIKEYNTMMSSASNKSEQSPKAPRQTLSIRQPFRATRPDGKLQSPHSPKQESERRLFSKDDISPPKDKGSWRRIMKNPFEKKPITGGTFGVRLDDCPPAHNNKYVPLIVDVCCKLVEERGLEATGIYRVPGNNAAISSMQEDLNKANTDIDIQDDKWRDLNVISSLLKSFFRKLPDPLFTNEKYNDFIEANRTEDPVERLKTLKRLILDLPDHHYETLKYLSAHLKTVADNAELNKMEPRNLAIVFGPTLVRTSEDNMTHMVTHMPDQYKIVETLIQKHDWFFSDESADEPITTVHEESTVESQPVPNIDHLLPNIGRTGLSPGDVSDSATSDSAKPKGSWGSGKDQYSRELLVSSLFAAASRKRKKPKDKPQPSSSEDELDNVFYQKELSQVEFQIPDKQNVDKDADLKAKANALSFKDADNIKGTNIITEDKLESDIMHSESTSPCLPKLLEPPKENHRLQVPSDDKTIPQISFQMEESMSDSGTMLSNSSQASAQRSKPKVVSPEFKGHDFLTADVSSITSDYSTTSSTIYMTGLDPNPISPEVQSVAESKGEEADDERSELISEGRPVETDSENDFHIFASSLAFNRQHRSKEEDPPRNVQANAEGSPSCTEGSITPRLDTRRFSSHKLIECDTLSRKKSVRLKTDSECSAESKNEETLSDAHEVMKKSRSPINVDTTANNEPEEPAWRIKITDRLKLRLKASADDMFGIGSQKAHAAETRKKKNIRRRHTLGGQRDFAEISVLNAWKINEPSSKEVELSAVDRLKPKCPSQDLSISDWLARERLRTSTSELSTVEPEEKHISETTGQKESVSPSPPPSSSPSQVSTADIPTGSESPSLGTAPQSDDQMNGDSFQSKNKNNFSPAVDAHPHKLSGTQVVRSRFYQYL.

A disordered region spans residues 1 to 41; it reads MATRRAIVPEQQQEPSSPASEISKNKDGQEQSEMVSPMEEE. Over residues 10–22 the composition is skewed to polar residues; that stretch reads EQQQEPSSPASEI. Residues 77–162 form the PDZ domain; sequence HTSIKDEENG…TLELSVMPKD (86 aa). 6 disordered regions span residues 211-236, 353-378, 416-487, 571-592, 640-704, and 868-905; these read VEVP…TTQP, PTAQ…QIDW, TDYN…RSES, QPTR…DRSG, FQRK…DSDA, and GKLG…DVFS. Polar residues-rich tracts occupy residues 216–236, 353–372, and 416–429; these read SGTS…TTQP, PTAQ…SPGP, and TDYN…FSGQ. The span at 441–451 shows a compositional bias: low complexity; sequence QQSVQMRQRSV. The segment covering 452–466 has biased composition (basic and acidic residues); it reads SQERLEDPVLMKEWP. Residues 468–479 show a composition bias toward polar residues; sequence SASQDTLSSAVA. Polar residues predominate over residues 640–669; the sequence is FQRKTQTESASGFQLDSVKTSMSASSSPPA. In terms of domain architecture, PH spans 906-1019; sequence DSNKEGFLYF…WIKAIQENGN (114 aa). The span at 1044-1064 shows a compositional bias: polar residues; it reads MSSASNKSEQSPKAPRQTLSI. The interval 1044 to 1107 is disordered; sequence MSSASNKSEQ…SPPKDKGSWR (64 aa). Over residues 1083–1105 the composition is skewed to basic and acidic residues; the sequence is PKQESERRLFSKDDISPPKDKGS. The Rho-GAP domain occupies 1126-1318; the sequence is VRLDDCPPAH…TLIQKHDWFF (193 aa). Disordered regions lie at residues 1330–1381, 1396–1416, 1512–1540, 1573–1598, 1626–1658, and 1827–1915; these read VHEE…SGKD, ASRK…EDEL, QMEE…PKVV, LDPN…DERS, RQHR…TPRL, and STSE…LSGT. The span at 1512 to 1534 shows a compositional bias: polar residues; it reads QMEESMSDSGTMLSNSSQASAQR. Polar residues-rich tracts occupy residues 1639 to 1653 and 1866 to 1902; these read VQAN…TEGS and TADI…NNFS.

The protein resides in the golgi apparatus membrane. It localises to the cell junction. Its subcellular location is the cytoplasmic vesicle membrane. It is found in the cytoplasm. The protein localises to the cytoskeleton. GTPase-activating protein (GAP) for rhoa and cdc42. This is Rho GTPase-activating protein 21-A (arhgap21-a) from Xenopus laevis (African clawed frog).